The following is a 464-amino-acid chain: Interstitial collagenase A (464 aa).

A signal peptide spans methionine 1–serine 17. Positions phenylalanine 18 to proline 96 are cleaved as a propeptide — activation peptide. Positions proline 87–valine 94 match the Cysteine switch motif. Cysteine 89 is a binding site for Zn(2+). The interval alanine 95–histidine 274 is metalloprotease. Aspartate 155 contributes to the Ca(2+) binding site. Positions 165 and 167 each coordinate Zn(2+). 2 residues coordinate Ca(2+): aspartate 172 and glycine 173. Position 180 (histidine 180) interacts with Zn(2+). Ca(2+) is bound by residues glycine 187, glycine 189, and aspartate 191. Histidine 193 provides a ligand contact to Zn(2+). Ca(2+) is bound by residues aspartate 195 and glutamate 198. Asparagine 202 carries an N-linked (GlcNAc...) asparagine glycan. Histidine 215 provides a ligand contact to Zn(2+). Glutamate 216 is an active-site residue. The Zn(2+) site is built by histidine 219 and histidine 225. Hemopexin repeat units follow at residues proline 273–leucine 322 and proline 323–proline 369. Residues cysteine 276 and cysteine 464 are joined by a disulfide bond. Aspartate 283 is a Ca(2+) binding site. An N-linked (GlcNAc...) asparagine glycan is attached at asparagine 371. Hemopexin repeat units lie at residues valine 372–isoleucine 420 and aspartate 421–cysteine 464. The Ca(2+) site is built by aspartate 376 and aspartate 425.

Belongs to the peptidase M10A family. Ca(2+) serves as cofactor. The cofactor is Zn(2+).

The protein resides in the secreted. It localises to the extracellular space. The protein localises to the extracellular matrix. The catalysed reaction is Cleavage of the triple helix of collagen at about three-quarters of the length of the molecule from the N-terminus, at 775-Gly-|-Ile-776 in the alpha1(I) chain. Cleaves synthetic substrates and alpha-macroglobulins at bonds where P1' is a hydrophobic residue.. With respect to regulation, can be activated without removal of the activation peptide. Its function is as follows. Cleaves collagens of types I, II, and III at one site in the helical domain. Also cleaves collagens of types VII and X. Able to degrade synthetic peptides and type I and II fibrillar collagen. This is Interstitial collagenase A (Mmp1a) from Mus musculus (Mouse).